Reading from the N-terminus, the 371-residue chain is DNA replication and repair protein RecF (371 aa).

30 to 37 (GQNGSGKT) lines the ATP pocket.

Belongs to the RecF family.

It is found in the cytoplasm. The RecF protein is involved in DNA metabolism; it is required for DNA replication and normal SOS inducibility. RecF binds preferentially to single-stranded, linear DNA. It also seems to bind ATP. The polypeptide is DNA replication and repair protein RecF (Chlorobium phaeovibrioides (strain DSM 265 / 1930) (Prosthecochloris vibrioformis (strain DSM 265))).